We begin with the raw amino-acid sequence, 65 residues long: MPKMKTKSGAAKRFTVRAGGTVKRSQAFKRHILTKKTTKSKRQLRGSVNVHFSDVASVRAMMPYA.

The disordered stretch occupies residues Met-1–Thr-21.

Belongs to the bacterial ribosomal protein bL35 family.

The chain is Large ribosomal subunit protein bL35 from Nitrosospira multiformis (strain ATCC 25196 / NCIMB 11849 / C 71).